The sequence spans 301 residues: (R)-2-haloacid dehalogenase (301 aa).

The protein belongs to the HAD-like hydrolase superfamily. S-2-haloalkanoic acid dehalogenase family. In terms of assembly, homotetramer.

It carries out the reaction an (R)-2-haloacid + H2O = a (2S)-2-hydroxycarboxylate + a halide anion + H(+). Functionally, catalyzes the hydrolytic dehalogenation of small (R)-2-haloalkanoic acids to yield the corresponding (S)-2-hydroxyalkanoic acids. Acts on acids of short chain lengths, C(2) to C(4), with inversion of configuration at C-2. The chain is (R)-2-haloacid dehalogenase (hadD) from Pseudomonas putida (Arthrobacter siderocapsulatus).